The chain runs to 706 residues: F-box/WD repeat-containing protein 7 (706 aa).

The interval Met1–Ser157 is disordered. Ser26 is modified (phosphoserine). Positions Gln32–Arg54 are enriched in basic and acidic residues. Polar residues predominate over residues Asn69–Phe83. A compositionally biased stretch (acidic residues) spans Val86–Asp128. The segment covering Asp129 to His138 has biased composition (basic and acidic residues). Thr204 carries the phosphothreonine modification. A Phosphoserine modification is found at Ser226. In terms of domain architecture, F-box spans Arg277 to Lys323. WD repeat units lie at residues Gly377–Val417, His419–Thr455, Gly458–Met497, His499–Thr535, Gly538–Thr577, His579–Gln617, and Lys621–Asn658.

In terms of assembly, homodimer; homodimerization plays a role in substrate binding and/or ubiquitination and degradation. Component of the SCF(FBXW7) complex consisting of CUL1, RBX1, SKP1 and FBXW7. Interacts (via F-box domain) with SKP1. Interacts (via F-box domain) with pseudophosphatase STYX; the interaction is direct and prevents FBXW7 interaction with SKP1. Interacts with cyclin-E (CCNE1 or CCNE2). Interacts with PSEN1. Forms a trimeric complex with NOTCH1 and SGK1. Interacts with NOTCH1 intracellular domain/NICD and NOTCH4 intracellular domain/NICD. Interacts with NOTCH2 intracellular domain (N2ICD). Interacts with MYC (when phosphorylated). Interacts with USP28, counteracting ubiquitination of MYC. Interacts with JUN. Found in a complex with JUN and PRR7. Interacts with JUN and PRR7; the interaction inhibits ubiquitination-mediated JUN degradation, promoting its phosphorylation and transcriptional activity. Interacts (when phosphorylated at Thr-204) with PIN1, disrupting FBXW7 dimerization and promoting FBXW7 autoubiquitination and degradation. Interacts with UBE2QL1. Interacts with FAM83D; promotes FBXW7 degradation. Interacts with MYCN; FBXW7 competes with AURKA for binding to unphosphorylated MYCN but not for binding to phosphorylated MYCN. Interacts with STOML1. Interacts with NFE2L1. Interacts with USP36, counteracting ubiquitination of MYC. Interacts with RICTOR; mediates RICTOR ubiquitination and degradation.l Interacts with USP38, counteracting ubiquitination of MYC. (Microbial infection) In case of infection, interacts with T.annulata PIN1 (TaPIN1); leading to FBXW7 autoubiquitination and subsequent degradation: FBXW7 degradation promotes stabilization of JUN, which promotes cell transformation. Post-translationally, phosphorylation at Thr-204 promotes interaction with PIN1, leading to disrupt FBXW7 dimerization and promoting FBXW7 autoubiquitination and degradation. Phosphorylated by ATM at Ser-26 in response to DNA damage, promoting recruitment to DNA damage sites and 'Lys-63'-linked ubiquitination of phosphorylated XRCC4. In terms of processing, ubiquitinated: autoubiquitinates following phosphorylation at Thr-204 and subsequent interaction with PIN1. Ubiquitination leads to its degradation.

The protein localises to the nucleus. It is found in the nucleoplasm. Its subcellular location is the chromosome. It functions in the pathway protein modification; protein ubiquitination. Substrate recognition component of a SCF (SKP1-CUL1-F-box protein) E3 ubiquitin-protein ligase complex which mediates the ubiquitination and subsequent proteasomal degradation of target proteins. Recognizes and binds phosphorylated sites/phosphodegrons within target proteins and thereafter brings them to the SCF complex for ubiquitination. Identified substrates include cyclin-E (CCNE1 or CCNE2), DISC1, JUN, MYC, NOTCH1 released notch intracellular domain (NICD), NOTCH2, MCL1, MLST8, RICTOR, and probably PSEN1. Acts as a negative regulator of JNK signaling by binding to phosphorylated JUN and promoting its ubiquitination and subsequent degradation. SCF(FBXW7) complex mediates the ubiquitination and subsequent degradation of NFE2L1. Involved in bone homeostasis and negative regulation of osteoclast differentiation. Also able to promote 'Lys-63'-linked ubiquitination in response to DNA damage. The SCF(FBXW7) complex facilitates double-strand break repair following phosphorylation by ATM: phosphorylation promotes localization to sites of double-strand breaks and 'Lys-63'-linked ubiquitination of phosphorylated XRCC4, enhancing DNA non-homologous end joining. The chain is F-box/WD repeat-containing protein 7 from Bos taurus (Bovine).